Reading from the N-terminus, the 393-residue chain is Protein TsgA (393 aa).

The next 12 membrane-spanning stretches (helical) occupy residues 11 to 31, 51 to 71, 78 to 98, 101 to 121, 134 to 154, 162 to 182, 206 to 226, 245 to 265, 273 to 293, 297 to 317, 332 to 352, and 361 to 381; these read WISF…GMVM, FLNA…EIVP, FGFL…SLAL, AAMF…TFLI, LLFT…IAAF, WYWV…LTFG, IGVL…LGFI, TLVS…SFIL, ILTV…TGTP, AWSI…IITL, FVLT…GPIV, and LLTA…LGFV.

Belongs to the major facilitator superfamily. TsgA family.

The protein localises to the cell inner membrane. The sequence is that of Protein TsgA from Shigella dysenteriae serotype 1 (strain Sd197).